The chain runs to 380 residues: Cytochrome b (380 aa).

4 helical membrane-spanning segments follow: residues 33–53 (FGSLLGLCLIAQILTGLFLAM), 77–98 (WLIRNLHANGASFFFICLYLHV), 113–133 (WNIGVVLLLLVMMTAFVGYVL), and 178–198 (FFAFHFLFPFIIAAMVLLHLL). Residues H83 and H97 each contribute to the heme b site. 2 residues coordinate heme b: H182 and H196. Residue H201 coordinates a ubiquinone. The next 4 helical transmembrane spans lie at 226–246 (YKDLFGFVILLLALSILTLFS), 288–308 (LGGVLALLASILILMVVPLLH), 320–340 (LTQILFWTLVADVAILTWIGG), and 347–367 (FITVGQVASVLYFALFLILIP).

It belongs to the cytochrome b family. The cytochrome bc1 complex contains 3 respiratory subunits (MT-CYB, CYC1 and UQCRFS1), 2 core proteins (UQCRC1 and UQCRC2) and probably 6 low-molecular weight proteins. Heme b serves as cofactor.

Its subcellular location is the mitochondrion inner membrane. Functionally, component of the ubiquinol-cytochrome c reductase complex (complex III or cytochrome b-c1 complex) that is part of the mitochondrial respiratory chain. The b-c1 complex mediates electron transfer from ubiquinol to cytochrome c. Contributes to the generation of a proton gradient across the mitochondrial membrane that is then used for ATP synthesis. In Allocyttus niger (Black oreo dory), this protein is Cytochrome b (mt-cyb).